The following is a 118-amino-acid chain: Large ribosomal subunit protein bL21c (118 aa).

This sequence belongs to the bacterial ribosomal protein bL21 family. Part of the 50S ribosomal subunit.

It is found in the plastid. The protein resides in the chloroplast. Functionally, this protein binds to 23S rRNA. The polypeptide is Large ribosomal subunit protein bL21c (Anthoceros angustus (Hornwort)).